The following is a 187-amino-acid chain: UPF0301 protein YqgE (187 aa).

It belongs to the UPF0301 (AlgH) family.

The chain is UPF0301 protein YqgE from Escherichia coli O7:K1 (strain IAI39 / ExPEC).